Reading from the N-terminus, the 526-residue chain is Delayed-rectifier potassium channel regulatory subunit KCNS1 (526 aa).

The Cytoplasmic segment spans residues methionine 1–leucine 217. The helical transmembrane segment at proline 218 to isoleucine 239 threads the bilayer. Residues histidine 240–proline 270 lie on the Extracellular side of the membrane. A helical transmembrane segment spans residues valine 271–leucine 293. Residues alanine 294–proline 304 lie on the Cytoplasmic side of the membrane. The helical transmembrane segment at leucine 305–alanine 322 threads the bilayer. Residues glycine 323 to leucine 337 lie on the Extracellular side of the membrane. The chain crosses the membrane as a helical; Voltage-sensor span at residues glycine 338–histidine 358. The Cytoplasmic portion of the chain corresponds to serine 359–tyrosine 373. The helical transmembrane segment at arginine 374 to tyrosine 395 threads the bilayer. At threonine 396–isoleucine 408 the chain is on the extracellular side. The segment at residues proline 409–threonine 420 is an intramembrane region (helical). The Selectivity filter motif lies at threonine 421–aspartate 426. The stretch at threonine 421–valine 428 is an intramembrane region. The Extracellular portion of the chain corresponds to proline 429–lysine 435. The chain crosses the membrane as a helical span at residues leucine 436 to tyrosine 464. The Cytoplasmic segment spans residues arginine 465–tyrosine 526. The segment at glycine 491–tyrosine 526 is disordered. The span at threonine 499 to aspartate 511 shows a compositional bias: basic and acidic residues.

It belongs to the potassium channel family. S (TC 1.A.1.2) subfamily. Kv9.1/KCNS1 sub-subfamily. Heterotetramer with KCNB1. Heterotetramer with KCNB2. Does not form homomultimers.

The protein localises to the cell membrane. Functionally, potassium channel regulatory subunit that modulate the delayed rectifier voltage-gated potassium channel activity of KCNB1 and KCNB2 by altering their kinetics, expression levels, and shifting the half-inactivation potential to more polarized values. While it does not form functional channels on its own, it can form functional heterotetrameric channels with KCNB1 and KCNB2. Each regulatory subunit has unique regulatory properties that can lead to extensive inhibition, significant changes in kinetics, and/or substantial shifts in the voltage dependencies of the inactivation process. This is Delayed-rectifier potassium channel regulatory subunit KCNS1 from Pongo abelii (Sumatran orangutan).